Consider the following 89-residue polypeptide: DNA-directed RNA polymerase subunit Rpo6 (89 aa).

This sequence belongs to the archaeal Rpo6/eukaryotic RPB6 RNA polymerase subunit family. Part of the RNA polymerase complex.

The protein resides in the cytoplasm. It carries out the reaction RNA(n) + a ribonucleoside 5'-triphosphate = RNA(n+1) + diphosphate. Its function is as follows. DNA-dependent RNA polymerase (RNAP) catalyzes the transcription of DNA into RNA using the four ribonucleoside triphosphates as substrates. This is DNA-directed RNA polymerase subunit Rpo6 from Aeropyrum pernix (strain ATCC 700893 / DSM 11879 / JCM 9820 / NBRC 100138 / K1).